A 709-amino-acid chain; its full sequence is MFPSLFRLVVFSKRYIFRSSQRLYTSLKQEQSRMSKIMEDLRSDYVPLIASIDVGTTSSRCILFNRWGQDVSKHQIEYSTSASKGKIGVSGLRRPSTAPARETPNAGDIKTSGKPIFSAEGYAIQETKFLKIEELDLDFHNEPTLKFPKPGWVECHPQKLLVNVVQCLASSLLSLQTINSERVANGLPPYKVICMGIANMRETTILWSRRTGKPIVNYGIVWNDTRTIKIVRDKWQNTSVDRQLQLRQKTGLPLLSTYFSCSKLRWFLDNEPLCTKAYEENDLMFGTVDTWLIYQLTKQKAFVSDVTNASRTGFMNLSTLKYDNELLEFWGIDKNLIHMPEIVSSSQYYGDFGIPDWIMEKLHDSPKTVLRDLVKRNLPIQGCLGDQSASMVGQLAYKPGAAKCTYGTGCFLLYNTGTKKLISQHGALTTLAFWFPHLQEYGGQKPELSKPHFALEGSVAVAGAVVQWLRDNLRLIDKSEDVGPIASTVPDSGGVVFVPAFSGLFAPYWDPDARATIMGMSQFTTASHIARAAVEGVCFQARAILKAMSSDAFGEGSKDRDFLEEISDVTYEKSPLSVLAVDGGMSRSNEVMQIQADILGPCVKVRRSPTAECTALGAAIAANMAFKDVNERPLWKDLHDVKKWVFYNGMEKNEQISPEAHPNLKIFRSESDDAERRKHWKYWEVAVERSKGWLKDIEGEHEQVLENFQ.

Thr-56 contributes to the substrate binding site. Arg-60 is a binding site for ATP. The disordered stretch occupies residues 86-110; sequence KIGVSGLRRPSTAPARETPNAGDIK. 3 residues coordinate substrate: Arg-201, Tyr-258, and Asp-386. Residues Thr-408, Gly-463, and 584 to 588 contribute to the ATP site; that span reads GMSRS.

Belongs to the FGGY kinase family.

It carries out the reaction glycerol + ATP = sn-glycerol 3-phosphate + ADP + H(+). It participates in polyol metabolism; glycerol degradation via glycerol kinase pathway; sn-glycerol 3-phosphate from glycerol: step 1/1. Its function is as follows. Key enzyme in the regulation of glycerol uptake and metabolism. Catalyzes the phosphorylation of glycerol to yield sn-glycerol 3-phosphate. The chain is Glycerol kinase (GUT1) from Saccharomyces cerevisiae (strain ATCC 204508 / S288c) (Baker's yeast).